A 368-amino-acid chain; its full sequence is Histidinol-phosphate aminotransferase (368 aa).

The residue at position 226 (lysine 226) is an N6-(pyridoxal phosphate)lysine.

Belongs to the class-II pyridoxal-phosphate-dependent aminotransferase family. Histidinol-phosphate aminotransferase subfamily. Homodimer. Pyridoxal 5'-phosphate serves as cofactor.

The catalysed reaction is L-histidinol phosphate + 2-oxoglutarate = 3-(imidazol-4-yl)-2-oxopropyl phosphate + L-glutamate. Its pathway is amino-acid biosynthesis; L-histidine biosynthesis; L-histidine from 5-phospho-alpha-D-ribose 1-diphosphate: step 7/9. This chain is Histidinol-phosphate aminotransferase, found in Colwellia psychrerythraea (strain 34H / ATCC BAA-681) (Vibrio psychroerythus).